Consider the following 222-residue polypeptide: UPF0758 protein Cag_1513 (222 aa).

The MPN domain occupies 100–222 (KIMAAGDVFE…WYSFRERGLL (123 aa)). Histidine 171, histidine 173, and aspartate 184 together coordinate Zn(2+). Residues 171–184 (HNHPSGDVNPSNAD) carry the JAMM motif motif.

This sequence belongs to the UPF0758 family.

The protein is UPF0758 protein Cag_1513 of Chlorobium chlorochromatii (strain CaD3).